Here is a 114-residue protein sequence, read N- to C-terminus: Iron-sulfur cluster insertion protein ErpA (114 aa).

Iron-sulfur cluster-binding residues include C42, C106, and C108.

The protein belongs to the HesB/IscA family. Homodimer. Requires iron-sulfur cluster as cofactor.

Required for insertion of 4Fe-4S clusters for at least IspG. The polypeptide is Iron-sulfur cluster insertion protein ErpA (Proteus mirabilis (strain HI4320)).